The chain runs to 440 residues: D-serine dehydratase (440 aa).

Lysine 116 bears the N6-(pyridoxal phosphate)lysine mark.

Belongs to the serine/threonine dehydratase family. DsdA subfamily. As to quaternary structure, monomer. Requires pyridoxal 5'-phosphate as cofactor.

It catalyses the reaction D-serine = pyruvate + NH4(+). In Salmonella choleraesuis (strain SC-B67), this protein is D-serine dehydratase.